We begin with the raw amino-acid sequence, 165 residues long: Calcium-binding protein H (165 aa).

EF-hand domains follow at residues 7–42 (QIEKDVEKIIGQYDGDKNGEVTINEAIEFFKRMGSK), 43–78 (YPEKCAIVLFKMYDLDNEGKISYDEIQEEIFKRYQD), 88–123 (YFQDDIEAFLLRYDKNRDNRIDFKELEQCFESIGSD), and 124–159 (HPKENANHIFTEIDKNRDGYLTIAEIKNYCRNTIRS). 20 residues coordinate Ca(2+): D20, D22, N24, E26, E31, D56, D58, E60, K62, E67, D101, N103, D105, R107, E112, D137, N139, D141, Y143, and E148.

This Dictyostelium discoideum (Social amoeba) protein is Calcium-binding protein H (cbpH).